The primary structure comprises 172 residues: Shikimate kinase (172 aa).

Position 14–19 (14–19 (GAGKTT)) interacts with ATP. A Mg(2+)-binding site is contributed by Thr18. The substrate site is built by Asp36, Arg60, and Gly82. Arg119 is a binding site for ATP. Arg137 contributes to the substrate binding site.

The protein belongs to the shikimate kinase family. Monomer. It depends on Mg(2+) as a cofactor.

It is found in the cytoplasm. The enzyme catalyses shikimate + ATP = 3-phosphoshikimate + ADP + H(+). It participates in metabolic intermediate biosynthesis; chorismate biosynthesis; chorismate from D-erythrose 4-phosphate and phosphoenolpyruvate: step 5/7. Catalyzes the specific phosphorylation of the 3-hydroxyl group of shikimic acid using ATP as a cosubstrate. The polypeptide is Shikimate kinase (Thermobifida fusca (strain YX)).